Here is an 88-residue protein sequence, read N- to C-terminus: Antitoxin VapB21 (88 aa).

Its function is as follows. Antitoxin component of a type II toxin-antitoxin (TA) system. The polypeptide is Antitoxin VapB21 (vapB21) (Mycobacterium tuberculosis (strain CDC 1551 / Oshkosh)).